We begin with the raw amino-acid sequence, 603 residues long: Aspartate--tRNA(Asp/Asn) ligase (603 aa).

The interval Q205–K208 is aspartate. Residue R227 participates in L-aspartate binding. ATP-binding positions include R227–E229 and Q236. H463 contributes to the L-aspartate binding site. E497 lines the ATP pocket. R504 serves as a coordination point for L-aspartate. G549–R552 contributes to the ATP binding site.

It belongs to the class-II aminoacyl-tRNA synthetase family. Type 1 subfamily. In terms of assembly, homodimer.

The protein resides in the cytoplasm. The catalysed reaction is tRNA(Asx) + L-aspartate + ATP = L-aspartyl-tRNA(Asx) + AMP + diphosphate. Aspartyl-tRNA synthetase with relaxed tRNA specificity since it is able to aspartylate not only its cognate tRNA(Asp) but also tRNA(Asn). Reaction proceeds in two steps: L-aspartate is first activated by ATP to form Asp-AMP and then transferred to the acceptor end of tRNA(Asp/Asn). This is Aspartate--tRNA(Asp/Asn) ligase from Anaeromyxobacter dehalogenans (strain 2CP-C).